Reading from the N-terminus, the 312-residue chain is Olfactory receptor 2B8 (312 aa).

Residues 1–25 (MDQKNGSSFTGFILLGFSDRPQLEL) are Extracellular-facing. Asparagine 5 is a glycosylation site (N-linked (GlcNAc...) asparagine). A helical membrane pass occupies residues 26–49 (VLFVVLLIFYIFTLLGNKTIIVLS). Over 50–57 (HLDPHLHT) the chain is Cytoplasmic. The chain crosses the membrane as a helical span at residues 58-79 (PMYFFFSNLSFLDLCYTTGIVP). Residues 80 to 100 (QLLVNLRGADKSISYGGCVVQ) are Extracellular-facing. A disulfide bridge links cysteine 97 with cysteine 189. The chain crosses the membrane as a helical span at residues 101-120 (LYISLGLGSTECVLLGVMVF). Residues 121–139 (DRYAAVCRPLHYTVVMHPC) are Cytoplasmic-facing. The chain crosses the membrane as a helical span at residues 140–158 (LYVLMASTSWVIGFANSLL). The Extracellular portion of the chain corresponds to 159–195 (QTVLILLLTLCGRNKLEHFLCEVPPLLKLACVDTTMN). N-linked (GlcNAc...) asparagine glycosylation is present at asparagine 195. Residues 196–219 (ESELFFVSVIILLVPVALIIFSYS) form a helical membrane-spanning segment. At 220-236 (QIVRAVMRIKLATGQRK) the chain is on the cytoplasmic side. Residues 237–259 (VFGTCGSHLTVVSLFYGTAIYAY) form a helical membrane-spanning segment. Topologically, residues 260 to 272 (LQPGNNYSQDQGK) are extracellular. Asparagine 265 is a glycosylation site (N-linked (GlcNAc...) asparagine). Residues 273–292 (FISLFYTIITPMINPLIYTL) traverse the membrane as a helical segment. Over 293-312 (RNKDVKGALKKVLWKNYDSR) the chain is Cytoplasmic.

This sequence belongs to the G-protein coupled receptor 1 family.

The protein localises to the cell membrane. Its function is as follows. Odorant receptor. The protein is Olfactory receptor 2B8 of Homo sapiens (Human).